A 372-amino-acid chain; its full sequence is NAD(P)H-quinone oxidoreductase subunit 1 (372 aa).

Transmembrane regions (helical) follow at residues 27–47 (AVWM…GVLI), 97–117 (ALFT…YLIV), 128–148 (LGIG…GLLM), 166–186 (AAQS…IAMM), 204–224 (ILGW…IAAL), 254–274 (FALF…MVAI), 308–328 (AVGI…AILL), and 351–371 (VGLV…IAFG).

Belongs to the complex I subunit 1 family. In terms of assembly, NDH-1 is composed of at least 11 different subunits.

The protein localises to the cellular thylakoid membrane. The enzyme catalyses a plastoquinone + NADH + (n+1) H(+)(in) = a plastoquinol + NAD(+) + n H(+)(out). It catalyses the reaction a plastoquinone + NADPH + (n+1) H(+)(in) = a plastoquinol + NADP(+) + n H(+)(out). In terms of biological role, NDH-1 shuttles electrons from an unknown electron donor, via FMN and iron-sulfur (Fe-S) centers, to quinones in the respiratory and/or the photosynthetic chain. The immediate electron acceptor for the enzyme in this species is believed to be plastoquinone. Couples the redox reaction to proton translocation, and thus conserves the redox energy in a proton gradient. The chain is NAD(P)H-quinone oxidoreductase subunit 1 from Cyanothece sp. (strain PCC 7425 / ATCC 29141).